The following is a 462-amino-acid chain: Argininosuccinate lyase (462 aa).

The protein belongs to the lyase 1 family. Argininosuccinate lyase subfamily.

Its subcellular location is the cytoplasm. The enzyme catalyses 2-(N(omega)-L-arginino)succinate = fumarate + L-arginine. It participates in amino-acid biosynthesis; L-arginine biosynthesis; L-arginine from L-ornithine and carbamoyl phosphate: step 3/3. The protein is Argininosuccinate lyase of Lachnoclostridium phytofermentans (strain ATCC 700394 / DSM 18823 / ISDg) (Clostridium phytofermentans).